Here is a 1755-residue protein sequence, read N- to C-terminus: Transposon Ty1-DR1 Gag-Pol polyprotein (1755 aa).

3 stretches are compositionally biased toward polar residues: residues 1–10 (MESQQLSNYP), 48–60 (TKANSQQTTTPAS), and 127–152 (QSQFPQYPSSVGTPLSTPSPESGNTF). Disordered stretches follow at residues 1–93 (MESQ…MMTQ), 126–173 (PQSQ…RPPP), and 352–421 (GSRN…SKST). The segment covering 153–165 (TDSSSADSDMTST) has biased composition (low complexity). The interval 299–401 (NNGIHINNKV…NSKSKTARAH (103 aa)) is RNA-binding. Positions 402–418 (NVSTSNNSPSTDNDSIS) are enriched in low complexity. Ser416 bears the Phosphoserine mark. Asp461 functions as the For protease activity; shared with dimeric partner in the catalytic mechanism. The segment at 583–640 (NVHTSESTRKYPYPFIHRMLAHANAQTIRYSLKNNTITYFNESDVDWSSAIDYQCPDC) is integrase-type zinc finger-like. The region spanning 660-835 (NSYEPFQYLH…AGLDISTLLP (176 aa)) is the Integrase catalytic domain. Residues Asp671 and Asp736 each contribute to the Mg(2+) site. 3 disordered regions span residues 956 to 1087 (SKAV…ETEK), 1092 to 1111 (RSPSIDASPPENNSSHNIVP), and 1130 to 1187 (DLPL…DNET). Low complexity predominate over residues 960-969 (SPTDSTPPST). Polar residues predominate over residues 1005–1015 (STPQISNIEST). Residues 1038 to 1053 (ESSHASKSKDFRHSDS) are compositionally biased toward basic and acidic residues. 2 stretches are compositionally biased toward polar residues: residues 1054 to 1082 (YSENETNHTNVPISSTGGTNNKTVPQISD) and 1101 to 1111 (PENNSSHNIVP). The short motif at 1178–1212 (KKRSLEDNETEIKVSRDTWNTKNMRSLEPPRSKKR) is the Bipartite nuclear localization signal element. The Reverse transcriptase Ty1/copia-type domain maps to 1338 to 1476 (NNYYITQLDI…DILGLEIKYQ (139 aa)). Residues Asp1346, Asp1427, Asp1428, Asp1610, Glu1652, and Asp1685 each coordinate Mg(2+). One can recognise an RNase H Ty1/copia-type domain in the interval 1610–1752 (DASYGNQPYY…IKTFKLLTNK (143 aa)).

The capsid protein forms a homotrimer, from which the VLPs are assembled. The protease is a homodimer, whose active site consists of two apposed aspartic acid residues. Initially, virus-like particles (VLPs) are composed of the structural unprocessed proteins Gag and Gag-Pol, and also contain the host initiator methionine tRNA (tRNA(i)-Met) which serves as a primer for minus-strand DNA synthesis, and a dimer of genomic Ty RNA. Processing of the polyproteins occurs within the particle and proceeds by an ordered pathway, called maturation. First, the protease (PR) is released by autocatalytic cleavage of the Gag-Pol polyprotein yielding capsid protein p45 and a Pol-p154 precursor protein. This cleavage is a prerequisite for subsequent processing of Pol-p154 at the remaining sites to release the mature structural and catalytic proteins. Maturation takes place prior to the RT reaction and is required to produce transposition-competent VLPs.

It localises to the cytoplasm. The protein resides in the nucleus. It carries out the reaction DNA(n) + a 2'-deoxyribonucleoside 5'-triphosphate = DNA(n+1) + diphosphate. It catalyses the reaction Endonucleolytic cleavage to 5'-phosphomonoester.. Capsid protein (CA) is the structural component of the virus-like particle (VLP), forming the shell that encapsulates the retrotransposons dimeric RNA genome. The particles are assembled from trimer-clustered units and there are holes in the capsid shells that allow for the diffusion of macromolecules. CA also has nucleocapsid-like chaperone activity, promoting primer tRNA(i)-Met annealing to the multipartite primer-binding site (PBS), dimerization of Ty1 RNA and initiation of reverse transcription. Its function is as follows. The aspartyl protease (PR) mediates the proteolytic cleavages of the Gag and Gag-Pol polyproteins after assembly of the VLP. Functionally, reverse transcriptase/ribonuclease H (RT) is a multifunctional enzyme that catalyzes the conversion of the retro-elements RNA genome into dsDNA within the VLP. The enzyme displays a DNA polymerase activity that can copy either DNA or RNA templates, and a ribonuclease H (RNase H) activity that cleaves the RNA strand of RNA-DNA heteroduplexes during plus-strand synthesis and hydrolyzes RNA primers. The conversion leads to a linear dsDNA copy of the retrotransposon that includes long terminal repeats (LTRs) at both ends. In terms of biological role, integrase (IN) targets the VLP to the nucleus, where a subparticle preintegration complex (PIC) containing at least integrase and the newly synthesized dsDNA copy of the retrotransposon must transit the nuclear membrane. Once in the nucleus, integrase performs the integration of the dsDNA into the host genome. The polypeptide is Transposon Ty1-DR1 Gag-Pol polyprotein (TY1B-DR1) (Saccharomyces cerevisiae (strain ATCC 204508 / S288c) (Baker's yeast)).